The sequence spans 469 residues: GTPase Der (469 aa).

EngA-type G domains lie at 3-166 and 177-350; these read PVIA…PEDE and LRLA…ESAN. GTP is bound by residues 9–16, 56–60, 118–121, 183–190, 230–234, and 295–298; these read GRPNVGKS, DTGGI, NKVD, DTAGV, and NKWD. In terms of domain architecture, KH-like spans 351–435; it reads LKVSPAKLTQ…PVKIEFKTSE (85 aa).

The protein belongs to the TRAFAC class TrmE-Era-EngA-EngB-Septin-like GTPase superfamily. EngA (Der) GTPase family. In terms of assembly, associates with the 50S ribosomal subunit.

Functionally, GTPase that plays an essential role in the late steps of ribosome biogenesis. This is GTPase Der from Acinetobacter baumannii (strain SDF).